Consider the following 59-residue polypeptide: Large ribosomal subunit protein uL30 (59 aa).

It belongs to the universal ribosomal protein uL30 family. As to quaternary structure, part of the 50S ribosomal subunit.

The polypeptide is Large ribosomal subunit protein uL30 (Ruminiclostridium cellulolyticum (strain ATCC 35319 / DSM 5812 / JCM 6584 / H10) (Clostridium cellulolyticum)).